The chain runs to 180 residues: Chromatin structure-remodeling complex protein RSC14 (180 aa).

In terms of assembly, interacts with STH1, RSC3 and ARP9. Component of the two forms of the RSC complex composed of at least either RSC1 or RSC2, and ARP7, ARP9, LDB7, NPL6, RSC3, RSC30, RSC4, RSC58, RSC6, RSC8, RSC9, SFH1, STH1, HTL1 and probably RTT102. The complexes interact with histone and histone variant components of centromeric chromatin. Component of a fungal-specific module (HTL1-LDB7-NPL6-RSC3-RSC30) within the RSC complex.

The protein resides in the nucleus. Functionally, component of the chromatin structure-remodeling complex (RSC), which is involved in transcription regulation and nucleosome positioning. RSC is responsible for the transfer of a histone octamer from a nucleosome core particle to naked DNA. The reaction requires ATP and involves an activated RSC-nucleosome intermediate. Remodeling reaction also involves DNA translocation, DNA twist and conformational change. As a reconfigurer of centromeric and flanking nucleosomes, RSC complex is required both for proper kinetochore function in chromosome segregation and, via a PKC1-dependent signaling pathway, for organization of the cellular cytoskeleton. Together with HTL1, NPL6, RSC3, RSC30 components, defines a fungal-specific module within the RSC complex that plays a role in many cellular functions including the maintenance of cell wall integrity. May be involved in the transfer of mannosylphosphate (MP) groups into N-linked oligosaccharides. This is Chromatin structure-remodeling complex protein RSC14 (LDB7) from Saccharomyces cerevisiae (strain ATCC 204508 / S288c) (Baker's yeast).